The sequence spans 97 residues: Nucleoid-associated protein HPP12_0031 (97 aa).

This sequence belongs to the YbaB/EbfC family. Homodimer.

It localises to the cytoplasm. It is found in the nucleoid. Binds to DNA and alters its conformation. May be involved in regulation of gene expression, nucleoid organization and DNA protection. The chain is Nucleoid-associated protein HPP12_0031 from Helicobacter pylori (strain P12).